An 82-amino-acid chain; its full sequence is Small ribosomal subunit protein uS17 (82 aa).

It belongs to the universal ribosomal protein uS17 family. In terms of assembly, part of the 30S ribosomal subunit.

One of the primary rRNA binding proteins, it binds specifically to the 5'-end of 16S ribosomal RNA. This chain is Small ribosomal subunit protein uS17, found in Nitrobacter winogradskyi (strain ATCC 25391 / DSM 10237 / CIP 104748 / NCIMB 11846 / Nb-255).